We begin with the raw amino-acid sequence, 351 residues long: DNA integrity scanning protein DisA (351 aa).

Positions arginine 4–phenylalanine 142 constitute a DAC domain. Residues glycine 71, leucine 89, and threonine 102–threonine 106 each bind ATP.

The protein belongs to the DisA family. Homooctamer. Requires Mg(2+) as cofactor.

The enzyme catalyses 2 ATP = 3',3'-c-di-AMP + 2 diphosphate. In terms of biological role, participates in a DNA-damage check-point that is active prior to asymmetric division when DNA is damaged. DisA forms globular foci that rapidly scan along the chromosomes during sporulation, searching for lesions. When a lesion is present, DisA pauses at the lesion site. This triggers a cellular response that culminates in a temporary block in sporulation initiation. Functionally, also has diadenylate cyclase activity, catalyzing the condensation of 2 ATP molecules into cyclic di-AMP (c-di-AMP). c-di-AMP acts as a signaling molecule that couples DNA integrity with progression of sporulation. The rise in c-di-AMP level generated by DisA while scanning the chromosome, operates as a positive signal that advances sporulation; upon encountering a lesion, the DisA focus arrests at the damaged site and halts c-di-AMP synthesis. This is DNA integrity scanning protein DisA from Symbiobacterium thermophilum (strain DSM 24528 / JCM 14929 / IAM 14863 / T).